Here is a 388-residue protein sequence, read N- to C-terminus: Ribonuclease D (388 aa).

A 3'-5' exonuclease domain is found at 7–173 (ITDSKTLAQF…QIFPKMLEEL (167 aa)). The region spanning 212 to 293 (KADVLGRLKA…ASHAPLAKEE (82 aa)) is the HRDC domain.

This sequence belongs to the RNase D family. A divalent metal cation is required as a cofactor.

Its subcellular location is the cytoplasm. The catalysed reaction is Exonucleolytic cleavage that removes extra residues from the 3'-terminus of tRNA to produce 5'-mononucleotides.. Functionally, exonuclease involved in the 3' processing of various precursor tRNAs. Initiates hydrolysis at the 3'-terminus of an RNA molecule and releases 5'-mononucleotides. In Sphingobium indicum (strain DSM 16413 / CCM 7287 / MTCC 6362 / UT26 / NBRC 101211 / UT26S) (Sphingobium japonicum), this protein is Ribonuclease D.